The chain runs to 316 residues: Biotin synthase (316 aa).

Residues 39–263 (NAIQCSTLLS…LFPKAYVRLS (225 aa)) form the Radical SAM core domain. [4Fe-4S] cluster is bound by residues C54, C58, and C61. The [2Fe-2S] cluster site is built by C98, C129, C189, and R261.

The protein belongs to the radical SAM superfamily. Biotin synthase family. As to quaternary structure, homodimer. [4Fe-4S] cluster serves as cofactor. [2Fe-2S] cluster is required as a cofactor.

The enzyme catalyses (4R,5S)-dethiobiotin + (sulfur carrier)-SH + 2 reduced [2Fe-2S]-[ferredoxin] + 2 S-adenosyl-L-methionine = (sulfur carrier)-H + biotin + 2 5'-deoxyadenosine + 2 L-methionine + 2 oxidized [2Fe-2S]-[ferredoxin]. Its pathway is cofactor biosynthesis; biotin biosynthesis; biotin from 7,8-diaminononanoate: step 2/2. Catalyzes the conversion of dethiobiotin (DTB) to biotin by the insertion of a sulfur atom into dethiobiotin via a radical-based mechanism. This chain is Biotin synthase, found in Acidithiobacillus ferrooxidans (strain ATCC 23270 / DSM 14882 / CIP 104768 / NCIMB 8455) (Ferrobacillus ferrooxidans (strain ATCC 23270)).